The sequence spans 225 residues: Octanoyltransferase (225 aa).

Positions 29-210 (PDTDDEIWVV…RLIAHLDGAT (182 aa)) constitute a BPL/LPL catalytic domain. Residues 69-76 (RGGQITYH), 141-143 (ALG), and 154-156 (GLS) each bind substrate. Cys172 functions as the Acyl-thioester intermediate in the catalytic mechanism.

Belongs to the LipB family.

Its subcellular location is the cytoplasm. It catalyses the reaction octanoyl-[ACP] + L-lysyl-[protein] = N(6)-octanoyl-L-lysyl-[protein] + holo-[ACP] + H(+). It functions in the pathway protein modification; protein lipoylation via endogenous pathway; protein N(6)-(lipoyl)lysine from octanoyl-[acyl-carrier-protein]: step 1/2. Functionally, catalyzes the transfer of endogenously produced octanoic acid from octanoyl-acyl-carrier-protein onto the lipoyl domains of lipoate-dependent enzymes. Lipoyl-ACP can also act as a substrate although octanoyl-ACP is likely to be the physiological substrate. This Burkholderia pseudomallei (strain K96243) protein is Octanoyltransferase.